We begin with the raw amino-acid sequence, 307 residues long: Elongation factor Ts (307 aa).

The tract at residues 80-83 is involved in Mg(2+) ion dislocation from EF-Tu; sequence TDFV.

The protein belongs to the EF-Ts family.

Its subcellular location is the cytoplasm. Functionally, associates with the EF-Tu.GDP complex and induces the exchange of GDP to GTP. It remains bound to the aminoacyl-tRNA.EF-Tu.GTP complex up to the GTP hydrolysis stage on the ribosome. The polypeptide is Elongation factor Ts (Clostridium botulinum (strain Loch Maree / Type A3)).